Here is a 307-residue protein sequence, read N- to C-terminus: Membrane protein insertase YidC 2 (307 aa).

The first 23 residues, 1–23, serve as a signal peptide directing secretion; that stretch reads MKLTLNRILFSGLALSILFTLTG. Cysteine 24 carries N-palmitoyl cysteine lipidation. Cysteine 24 is lipidated: S-diacylglycerol cysteine. The next 5 membrane-spanning stretches (helical) occupy residues 58–78, 135–155, 179–199, 209–225, and 231–251; these read LGYGLAIIIVTIIVRTLILPL, LGGIGCLPLLIQMPFFSAMYF, VLTAIIAALYFFQSWLSMMAV, TMMYTMPIMMIFMSFSL, and LYWLVGGFFSIIQQLITTYLL. The interval 263 to 307 is disordered; sequence YAKTPPKAYQSTSSRKDVTPSQNMEQANLPKKIKSNRNAGKQRKR. Polar residues predominate over residues 271–288; sequence YQSTSSRKDVTPSQNMEQ. The span at 293–307 shows a compositional bias: basic residues; sequence KKIKSNRNAGKQRKR.

Belongs to the OXA1/ALB3/YidC family. Type 2 subfamily.

The protein localises to the cell membrane. In terms of biological role, required for the insertion and/or proper folding and/or complex formation of integral membrane proteins into the membrane. Involved in integration of membrane proteins that insert both dependently and independently of the Sec translocase complex, as well as at least some lipoproteins. This Streptococcus pyogenes serotype M18 (strain MGAS8232) protein is Membrane protein insertase YidC 2.